The primary structure comprises 828 residues: Cadherin-22 (828 aa).

The signal sequence occupies residues 1–34 (MRPRPEGRGLRAGVALSPALLLLLLLPPPPTLLG). Residues 36–624 (LWAAGTPSPS…AFVMAASLSP (589 aa)) are Extracellular-facing. Cadherin domains follow at residues 64–168 (WVWN…EPRF), 169–277 (LHGP…PPRF), 278–394 (PQKM…PPEF), 395–498 (RPPS…NPPE), and 499–616 (LATP…TTAF). Asn-162 is a glycosylation site (N-linked (GlcNAc...) asparagine). Asn-466 and Asn-612 each carry an N-linked (GlcNAc...) asparagine glycan. A helical transmembrane segment spans residues 625 to 645 (GALIALLVCVLILVVLVLLIL). Over 646–828 (TLRRHHKSHL…HRGDDEAQAS (183 aa)) the chain is Cytoplasmic. Gly residues predominate over residues 702 to 719 (GGGSAGGGAGGGSGGGAG). Residues 702 to 745 (GGGSAGGGAGGGSGGGAGSPPQAHLPSERHSLPQGPPSPEPDFS) form a disordered region.

The protein resides in the cell membrane. Functionally, cadherins are calcium-dependent cell adhesion proteins. They preferentially interact with themselves in a homophilic manner in connecting cells; cadherins may thus contribute to the sorting of heterogeneous cell types. PB-cadherins may have a role in the morphological organization of pituitary gland and brain tissues. This is Cadherin-22 (CDH22) from Homo sapiens (Human).